The following is a 359-amino-acid chain: Peptide chain release factor 1 (359 aa).

Q235 is subject to N5-methylglutamine. The interval 282-306 (RQRADSERSADRKSQVGSGDRSERI) is disordered.

The protein belongs to the prokaryotic/mitochondrial release factor family. In terms of processing, methylated by PrmC. Methylation increases the termination efficiency of RF1.

It is found in the cytoplasm. In terms of biological role, peptide chain release factor 1 directs the termination of translation in response to the peptide chain termination codons UAG and UAA. This is Peptide chain release factor 1 from Rhizobium rhizogenes (strain K84 / ATCC BAA-868) (Agrobacterium radiobacter).